A 118-amino-acid chain; its full sequence is Ribosome-binding factor A (118 aa).

It belongs to the RbfA family. In terms of assembly, monomer. Binds 30S ribosomal subunits, but not 50S ribosomal subunits or 70S ribosomes.

It is found in the cytoplasm. Functionally, one of several proteins that assist in the late maturation steps of the functional core of the 30S ribosomal subunit. Associates with free 30S ribosomal subunits (but not with 30S subunits that are part of 70S ribosomes or polysomes). Required for efficient processing of 16S rRNA. May interact with the 5'-terminal helix region of 16S rRNA. This Dehalococcoides mccartyi (strain ATCC BAA-2266 / KCTC 15142 / 195) (Dehalococcoides ethenogenes (strain 195)) protein is Ribosome-binding factor A.